Consider the following 290-residue polypeptide: Shikimate dehydrogenase (NADP(+)) (290 aa).

Shikimate contacts are provided by residues 18-20 (SYS) and threonine 66. The active-site Proton acceptor is the lysine 70. Asparagine 91 and aspartate 106 together coordinate shikimate. Residues 130 to 134 (GNGGA) and methionine 230 each bind NADP(+). Tyrosine 232 serves as a coordination point for shikimate. Residue glycine 253 coordinates NADP(+).

This sequence belongs to the shikimate dehydrogenase family. In terms of assembly, homodimer.

The enzyme catalyses shikimate + NADP(+) = 3-dehydroshikimate + NADPH + H(+). The protein operates within metabolic intermediate biosynthesis; chorismate biosynthesis; chorismate from D-erythrose 4-phosphate and phosphoenolpyruvate: step 4/7. Its function is as follows. Involved in the biosynthesis of the chorismate, which leads to the biosynthesis of aromatic amino acids. Catalyzes the reversible NADPH linked reduction of 3-dehydroshikimate (DHSA) to yield shikimate (SA). This is Shikimate dehydrogenase (NADP(+)) from Prosthecochloris aestuarii (strain DSM 271 / SK 413).